Reading from the N-terminus, the 131-residue chain is Profilin-1 (131 aa).

It belongs to the profilin family. Occurs in many kinds of cells as a complex with monomeric actin in a 1:1 ratio.

The protein localises to the cytoplasm. It localises to the cytoskeleton. In terms of biological role, binds to actin and affects the structure of the cytoskeleton. At high concentrations, profilin prevents the polymerization of actin, whereas it enhances it at low concentrations. By binding to PIP2, it inhibits the formation of IP3 and DG. This Lilium longiflorum (Trumpet lily) protein is Profilin-1.